The following is a 498-amino-acid chain: Glycerol kinase (498 aa).

Threonine 14 is a binding site for ADP. 2 residues coordinate ATP: threonine 14 and threonine 15. Threonine 14 contributes to the sn-glycerol 3-phosphate binding site. Position 18 (arginine 18) interacts with ADP. Sn-glycerol 3-phosphate is bound by residues arginine 84, glutamate 85, tyrosine 136, and aspartate 246. Glycerol contacts are provided by arginine 84, glutamate 85, tyrosine 136, aspartate 246, and glutamine 247. ADP contacts are provided by threonine 268 and glycine 311. Residues threonine 268, glycine 311, glutamine 315, and glycine 412 each contribute to the ATP site. Glycine 412 and asparagine 416 together coordinate ADP.

Belongs to the FGGY kinase family.

The enzyme catalyses glycerol + ATP = sn-glycerol 3-phosphate + ADP + H(+). The protein operates within polyol metabolism; glycerol degradation via glycerol kinase pathway; sn-glycerol 3-phosphate from glycerol: step 1/1. With respect to regulation, inhibited by fructose 1,6-bisphosphate (FBP). Functionally, key enzyme in the regulation of glycerol uptake and metabolism. Catalyzes the phosphorylation of glycerol to yield sn-glycerol 3-phosphate. The sequence is that of Glycerol kinase from Leptospira biflexa serovar Patoc (strain Patoc 1 / Ames).